Reading from the N-terminus, the 2327-residue chain is Genome polyprotein (2327 aa).

In terms of domain architecture, Peptidase C28 spans 1–201 (MNTTDCFIAV…WKASVQRKLK (201 aa)). Over 1–1475 (MNTTDCFIAV…SFVKRAFKRL (1475 aa)) the chain is Cytoplasmic. Catalysis depends on for leader protease activity residues Cys-51, His-148, and Asp-163. Disordered regions lie at residues 196-218 (VQRKLKGAGQSSPATGSQNQSGN) and 238-265 (QLGDNAISGGSNEGSTDTTSTHTTNTQN). Gly-202 carries N-myristoyl glycine; by host lipidation. Polar residues-rich tracts occupy residues 204 to 218 (GQSSPATGSQNQSGN) and 238 to 251 (QLGDNAISGGSNEG). Residues 252 to 265 (STDTTSTHTTNTQN) are compositionally biased toward low complexity. An antigenic epitope region spans residues 787–795 (ALLRAATYY). The Cell attachment site motif lies at 864–866 (RGD). Residues 1184–1348 (NVHIANLCKV…DGYKINNKLD (165 aa)) enclose the SF3 helicase domain. 1212–1219 (GKSGQGKS) contacts ATP. The stretch at 1476–1496 (KENFEIVALCLTLLANIVIMI) is an intramembrane region. At 1497-2327 (RETHKRQKMV…RWVNAVCGDA (831 aa)) the chain is on the cytoplasmic side. Residues 1524-1584 (QTLDEAEKNP…PYAGPLERQR (61 aa)) form a disordered region. A compositionally biased stretch (basic and acidic residues) spans 1544–1558 (FRERTLPGQKARDDV). 3 positions are modified to O-(5'-phospho-RNA)-tyrosine: Tyr-1576, Tyr-1599, and Tyr-1623. The Peptidase C3 domain occupies 1647–1843 (APPTDLQKMV…YCSCVSRSML (197 aa)). The active-site For protease 3C activity; Proton donor/acceptor is His-1690. Residues Asp-1728 and Cys-1807 each act as for protease 3C activity in the active site. A Nuclear localization signal motif is present at residues 1873–1881 (MRKTKLAPT). The region spanning 2091-2209 (RNVWDVDYSA…ASDYDLDFEA (119 aa)) is the RdRp catalytic domain. Asp-2195 acts as the For RdRp activity in catalysis.

This sequence belongs to the picornaviruses polyprotein family. As to quaternary structure, interacts with host ISG15. Interacts (via R-G-D motif) with host ITGAV/ITGB6. Interacts with host MAVS; this interaction inhibits binding of host TRAF3 to MAVS, thereby suppressing interferon-mediated responses. In terms of assembly, forms homooligomers. As to quaternary structure, homohexamer. Interacts with host VIM. Interacts with host BECN1. Interacts with host DCTN3. In terms of assembly, interacts with RNA-dependent RNA polymerase; this interaction allows 3B-1 to binds 2 polymerases and act as a primer. It also allows the recruitment of the RNA-dependent RNA polymerase to host membranes. As to quaternary structure, interacts with RNA-dependent RNA polymerase; this interaction allows 3B-2 to act as a primer. Interacts with RNA-dependent RNA polymerase; this interaction allows 3B-3 to act as a primer. In terms of assembly, interacts with 3B-1; this interaction allows 3B-1 to binds 2 polymerases and act as a primer. It also allows the recruitment of the RNA-dependent RNA polymerase to host membranes. Interacts with 3B-2; this interaction allows 3B-2 to act as a primer. Interacts with 3B-3; this interaction allows 3B-3 to act as a primer. Removes six residues from its own C-terminus, generating sLb(pro). Post-translationally, specific enzymatic cleavages in vivo by the viral proteases yield a variety of precursors and mature proteins. The polyprotein seems to be cotranslationally cleaved at the 2A/2B junction by a ribosomal skip from one codon to the next without formation of a peptide bond. This process would release the L-P1-2A peptide from the translational complex. In terms of processing, during virion maturation, immature virions are rendered infectious following cleavage of VP0 into VP4 and VP2. This maturation seems to be an autocatalytic event triggered by the presence of RNA in the capsid and is followed by a conformational change of the particle. Myristoylation is required during RNA encapsidation and formation of the mature virus particle. Post-translationally, uridylylated by the polymerase and covalently linked to the 5'-end of genomic RNA. These uridylylated forms act as a nucleotide-peptide primer for the polymerase.

The protein resides in the host nucleus. It localises to the host cytoplasm. It is found in the virion. The protein localises to the host endoplasmic reticulum membrane. Its subcellular location is the host cytoplasmic vesicle membrane. It catalyses the reaction Autocatalytically cleaves itself from the polyprotein of the foot-and-mouth disease virus by hydrolysis of a Lys-|-Gly bond, but then cleaves host cell initiation factor eIF-4G at bonds -Gly-|-Arg- and -Lys-|-Arg-.. The catalysed reaction is a ribonucleoside 5'-triphosphate + H2O = a ribonucleoside 5'-diphosphate + phosphate + H(+). The enzyme catalyses RNA(n) + a ribonucleoside 5'-triphosphate = RNA(n+1) + diphosphate. It carries out the reaction Selective cleavage of Gln-|-Gly bond in the poliovirus polyprotein. In other picornavirus reactions Glu may be substituted for Gln, and Ser or Thr for Gly.. In terms of biological role, autocatalytically cleaves itself from the polyprotein at the L/VP0 junction. Also cleaves the host translation initiation factors EIF4G1 and EIF4G3, in order to shut off the capped cellular mRNA transcription. Plays a role in counteracting host innate antiviral response using diverse mechanisms. Possesses a deubiquitinase activity acting on both 'Lys-48' and 'Lys-63'-linked polyubiquitin chains. In turn, inhibits the ubiquitination and subsequent activation of key signaling molecules of type I IFN response such as host RIGI, TBK1, TRAF3 and TRAF6. Inhibits host NF-kappa-B activity by inducing a decrease in RELA mRNA levels. Cleaves a peptide bond in the C-terminus of host ISG15, resulting in the damaging of this modifier that can no longer be attached to target proteins. Also cleaves host G3BP1 and G3BP2 in order to inhibit cytoplasmic stress granules assembly. Functionally, lies on the inner surface of the capsid shell. After binding to the host receptor, the capsid undergoes conformational changes. Capsid protein VP4 is released, capsid protein VP1 N-terminus is externalized, and together, they shape a pore in the host membrane through which the viral genome is translocated into the host cell cytoplasm. After genome has been released, the channel shrinks. Its function is as follows. Forms an icosahedral capsid of pseudo T=3 symmetry with capsid proteins VP1 and VP3. The capsid is composed of 60 copies of each capsid protein organized in the form of twelve pentamers and encloses the viral positive strand RNA genome. Upon acidifcation in the endosome, dissociates into pentamers. Forms an icosahedral capsid of pseudo T=3 symmetry with capsid proteins VP0 and VP3. The capsid is composed of 60 copies of each capsid protein organized in the form of twelve pentamers and encloses the viral positive strand RNA genome. Upon acidifcation in the endosome, dissociates into pentamers. In terms of biological role, forms an icosahedral capsid of pseudo T=3 symmetry with capsid proteins VP2 and VP3. The capsid is composed of 60 copies of each capsid protein organized in the form of twelve pentamers and encloses the viral positive strand RNA genome. Mediates cell entry by attachment to an integrin receptor, usually host ITGAV/ITGB6. In addition, targets host MAVS to suppress type I IFN pathway. Upon acidifcation in the endosome, dissociates into pentamers. Functionally, mediates self-processing of the polyprotein by a translational effect termed 'ribosome skipping'. Mechanistically, 2A-mediated cleavage occurs between the C-terminal glycine and the proline of the downstream protein 2B. In the case of foot-and-mouth disease virus, the 2A oligopeptide is post-translationally 'trimmed' from the C-terminus of the upstream protein 1D by 3C proteinase. Its function is as follows. Plays an essential role in the virus replication cycle by acting as a viroporin. Creates a pore in the host endoplasmic reticulum and as a consequence releases Ca2+ in the cytoplasm of infected cell. In turn, high levels of cytoplasmic calcium may trigger membrane trafficking and transport of viral ER-associated proteins to viroplasms, sites of viral genome replication. Associates with and induces structural rearrangements of intracellular membranes. Triggers host autophagy by interacting with host BECN1 and thereby promotes viral replication. Participates in viral replication and interacts with host DHX9. Displays RNA-binding, nucleotide binding and NTPase activities. May play a role in virion morphogenesis and viral RNA encapsidation by interacting with the capsid protein VP3. In terms of biological role, plays important roles in virus replication, virulence and host range. Cooperates with host DDX56 to inhibit IRF3 nuclear translocation and subsequent type I interferon production. Functionally, covalently linked to the 5'-end of both the positive-strand and negative-strand genomic RNAs. Acts as a genome-linked replication primer. Its function is as follows. Cysteine protease that generates mature viral proteins from the precursor polyprotein. In addition to its proteolytic activity, binds to viral RNA and thus influences viral genome replication. RNA and substrate bind cooperatively to the protease. RNA-directed RNA polymerase 3D-POL replicates genomic and antigenomic RNA by recognizing replications specific signals. Covalently attaches UMP to a tyrosine of VPg, which is used to prime RNA synthesis. The positive stranded RNA genome is first replicated at virus induced membranous vesicles, creating a dsRNA genomic replication form. This dsRNA is then used as template to synthesize positive stranded RNA genomes. ss(+)RNA genomes are either translated, replicated or encapsidated. In Bos taurus (Bovine), this protein is Genome polyprotein.